Here is a 2539-residue protein sequence, read N- to C-terminus: Zinc finger FYVE domain-containing protein 26 (2539 aa).

Phosphoserine is present on residues S297, S615, S619, and S703. 3 disordered regions span residues H594–V637, I699–S724, and W738–A806. Basic residues predominate over residues P764–R774. The span at S787–S805 shows a compositional bias: low complexity. Residue S800 is modified to Phosphoserine. Positions M868–G895 form a coiled coil. The disordered stretch occupies residues D1267–S1296. Positions S1271–P1282 are enriched in polar residues. Residues S1742, S1764, S1780, and S1782 each carry the phosphoserine modification. A disordered region spans residues A1754–Q1808. Residues P1760–P1769 show a composition bias toward low complexity. Residues D1812–N1872 form an FYVE-type zinc finger. Positions 1818, 1821, 1835, 1838, 1843, 1846, 1864, and 1867 each coordinate Zn(2+).

In terms of assembly, interacts with AP5Z1, AP5B1, AP5S1 and SPG11. Interacts with TTC19 and KIF13A. Strongest expression in the adrenal gland, bone marrow, adult brain, fetal brain, lung, placenta, prostate, skeletal muscle, testis, thymus, and retina. Intermediate levels are detected in other structures, including the spinal cord.

The protein resides in the cytoplasm. It localises to the cytoskeleton. It is found in the microtubule organizing center. The protein localises to the centrosome. Its subcellular location is the midbody. Phosphatidylinositol 3-phosphate-binding protein required for the abscission step in cytokinesis: recruited to the midbody during cytokinesis and acts as a regulator of abscission. May also be required for efficient homologous recombination DNA double-strand break repair. This is Zinc finger FYVE domain-containing protein 26 (ZFYVE26) from Homo sapiens (Human).